The primary structure comprises 525 residues: Light-independent protochlorophyllide reductase subunit B (525 aa).

A [4Fe-4S] cluster-binding site is contributed by D36. D274 (proton donor) is an active-site residue. 409-410 (GL) contributes to the substrate binding site. The interval 433-464 (HGGKAVAREESPVAPADLAPAATSDTPAAPSP) is disordered. Positions 444-464 (PVAPADLAPAATSDTPAAPSP) are enriched in low complexity.

Belongs to the ChlB/BchB/BchZ family. In terms of assembly, protochlorophyllide reductase is composed of three subunits; BchL, BchN and BchB. Forms a heterotetramer of two BchB and two BchN subunits. The cofactor is [4Fe-4S] cluster.

It catalyses the reaction chlorophyllide a + oxidized 2[4Fe-4S]-[ferredoxin] + 2 ADP + 2 phosphate = protochlorophyllide a + reduced 2[4Fe-4S]-[ferredoxin] + 2 ATP + 2 H2O. It participates in porphyrin-containing compound metabolism; bacteriochlorophyll biosynthesis (light-independent). In terms of biological role, component of the dark-operative protochlorophyllide reductase (DPOR) that uses Mg-ATP and reduced ferredoxin to reduce ring D of protochlorophyllide (Pchlide) to form chlorophyllide a (Chlide). This reaction is light-independent. The NB-protein (BchN-BchB) is the catalytic component of the complex. This chain is Light-independent protochlorophyllide reductase subunit B, found in Rhodobacter capsulatus (strain ATCC BAA-309 / NBRC 16581 / SB1003).